The sequence spans 369 residues: Fructose-bisphosphate aldolase 2 (369 aa).

Aspartate 40 is a dihydroxyacetone phosphate binding site. The D-glyceraldehyde 3-phosphate site is built by serine 42 and threonine 45. Arginine 49 is a beta-D-fructose 1,6-bisphosphate binding site. Lysine 113 serves as a coordination point for D-glyceraldehyde 3-phosphate. Lysine 152 provides a ligand contact to dihydroxyacetone phosphate. Glutamate 195 contacts D-glyceraldehyde 3-phosphate. Residue glutamate 195 is the Proton acceptor of the active site. Positions 237, 279, and 280 each coordinate dihydroxyacetone phosphate. The Schiff-base intermediate with dihydroxyacetone phosphate role is filled by lysine 237. Residues 279–281 (SGG) and serine 307 each bind beta-D-fructose 1,6-bisphosphate. Residues glycine 309 and arginine 310 each coordinate dihydroxyacetone phosphate. Arginine 310 contributes to the beta-D-fructose 1,6-bisphosphate binding site.

This sequence belongs to the class I fructose-bisphosphate aldolase family.

It is found in the cytoplasm. It localises to the membrane. The protein localises to the host cell membrane. The enzyme catalyses beta-D-fructose 1,6-bisphosphate = D-glyceraldehyde 3-phosphate + dihydroxyacetone phosphate. It participates in carbohydrate degradation; glycolysis; D-glyceraldehyde 3-phosphate and glycerone phosphate from D-glucose: step 4/4. Functionally, plays a key role in glycolysis by catalyzing the cleavage of fructose 1,6-bisphosphate into dihydroxyacetone phosphate and glyceraldehyde 3-phosphate. This Plasmodium berghei (strain Anka) protein is Fructose-bisphosphate aldolase 2 (ALDO2).